We begin with the raw amino-acid sequence, 163 residues long: Nucleotide-binding protein YajQ (163 aa).

Belongs to the YajQ family.

In terms of biological role, nucleotide-binding protein. The polypeptide is Nucleotide-binding protein YajQ (Shigella dysenteriae serotype 1 (strain Sd197)).